Reading from the N-terminus, the 93-residue chain is Large ribosomal subunit protein bL27 (93 aa).

A propeptide spanning residues 1–10 (MLLKLQIQLF) is cleaved from the precursor.

The protein belongs to the bacterial ribosomal protein bL27 family. In terms of processing, the N-terminus is cleaved by ribosomal processing cysteine protease Prp.

This chain is Large ribosomal subunit protein bL27, found in Phytoplasma australiense.